Here is a 160-residue protein sequence, read N- to C-terminus: ATP synthase subunit b 3 (160 aa).

A helical membrane pass occupies residues Pro5–Ala25.

Belongs to the ATPase B chain family. As to quaternary structure, F-type ATPases have 2 components, F(1) - the catalytic core - and F(0) - the membrane proton channel. F(1) has five subunits: alpha(3), beta(3), gamma(1), delta(1), epsilon(1). F(0) has three main subunits: a(1), b(2) and c(10-14). The alpha and beta chains form an alternating ring which encloses part of the gamma chain. F(1) is attached to F(0) by a central stalk formed by the gamma and epsilon chains, while a peripheral stalk is formed by the delta and b chains.

It is found in the cell inner membrane. Its function is as follows. F(1)F(0) ATP synthase produces ATP from ADP in the presence of a proton or sodium gradient. F-type ATPases consist of two structural domains, F(1) containing the extramembraneous catalytic core and F(0) containing the membrane proton channel, linked together by a central stalk and a peripheral stalk. During catalysis, ATP synthesis in the catalytic domain of F(1) is coupled via a rotary mechanism of the central stalk subunits to proton translocation. Functionally, component of the F(0) channel, it forms part of the peripheral stalk, linking F(1) to F(0). The protein is ATP synthase subunit b 3 of Rhodospirillum centenum (strain ATCC 51521 / SW).